The primary structure comprises 131 residues: mRNA stability protein IGO2 (131 aa).

Positions 1 to 13 (MSEDLSPTSSRVD) are enriched in polar residues. Positions 1–26 (MSEDLSPTSSRVDLSNPHGFTKEGVD) are disordered. Ser-2 carries the post-translational modification N-acetylserine. A phosphoserine mark is found at Ser-6, Ser-63, Ser-108, and Ser-119. The disordered stretch occupies residues 81 to 131 (VNNSSNNLPVTNPSGLRESIIRRRMSSSSGGDSISRQGSISSGPPPRSPNK). Residues 106–122 (SSSSGGDSISRQGSISS) are compositionally biased toward low complexity.

This sequence belongs to the endosulfine family. Post-translationally, phosphorylated by RIM15.

It localises to the cytoplasm. It is found in the nucleus. Required for TORC1 to properly control gene expression and chronological life span. Plays an essential role in initiation of the G0 program by preventing the degradation of specific nutrient-regulated mRNAs via the 5'-3' mRNA decay pathway. The polypeptide is mRNA stability protein IGO2 (IGO2) (Saccharomyces cerevisiae (strain ATCC 204508 / S288c) (Baker's yeast)).